A 462-amino-acid polypeptide reads, in one-letter code: Transcription initiation factor TFIID subunit 7-like (462 aa).

2 disordered regions span residues 1-97 and 327-366; these read MECP…VPDE and DSRS…SEEY. 2 stretches are compositionally biased toward low complexity: residues 16–30 and 66–77; these read STPT…SQQE and DADSSAQAAAQA. Residues 333-365 show a composition bias toward acidic residues; the sequence is DDDEDEDDEDEDEDEDEDEDEDKEEEEEDCSEE. Residues 342-462 adopt a coiled-coil conformation; sequence DEDEDEDEDE…QEQLQRFLKK (121 aa).

It belongs to the TAF7 family. TFIID is composed of TATA binding protein (TBP) and a number of TBP-associated factors (TAFs). TAF7L may replace TAF7 in a spermatogenesis-specific form of TFIID. Interacts with TBP; the interaction occurs in a sub-population of cells (pachytene and haploid round spermatids) and is developmentally regulated through differential intracellular localization of the two proteins. Interacts with TAF1. As to expression, testis-specific.

It is found in the nucleus. Its subcellular location is the cytoplasm. Its function is as follows. Probably functions as a spermatogenesis-specific component of the DNA-binding general transcription factor complex TFIID, a multimeric protein complex that plays a central role in mediating promoter responses to various activators and repressors. May play a role in spermatogenesis. This Homo sapiens (Human) protein is Transcription initiation factor TFIID subunit 7-like (TAF7L).